We begin with the raw amino-acid sequence, 640 residues long: Chaperone protein DnaK (640 aa).

A Phosphothreonine; by autocatalysis modification is found at threonine 196. Disordered regions lie at residues 510-530 (NDAK…ETKN) and 598-640 (AADA…DKDK).

Belongs to the heat shock protein 70 family.

Acts as a chaperone. The polypeptide is Chaperone protein DnaK (Prosthecochloris aestuarii (strain DSM 271 / SK 413)).